The following is a 367-amino-acid chain: 1-deoxy-D-xylulose 5-phosphate reductoisomerase (367 aa).

NADPH-binding residues include Thr10, Gly11, Ser12, Ile13, Gly34, Lys35, Asn36, and Asn112. Residue Lys113 coordinates 1-deoxy-D-xylulose 5-phosphate. Glu114 provides a ligand contact to NADPH. Mn(2+) is bound at residue Asp138. Residues Ser139, Glu140, Ser164, and His186 each coordinate 1-deoxy-D-xylulose 5-phosphate. Residue Glu140 participates in Mn(2+) binding. An NADPH-binding site is contributed by Gly192. 1-deoxy-D-xylulose 5-phosphate contacts are provided by Ser199, Asn204, Lys205, and Glu208. Mn(2+) is bound at residue Glu208.

It belongs to the DXR family. Requires Mg(2+) as cofactor. The cofactor is Mn(2+).

It carries out the reaction 2-C-methyl-D-erythritol 4-phosphate + NADP(+) = 1-deoxy-D-xylulose 5-phosphate + NADPH + H(+). It functions in the pathway isoprenoid biosynthesis; isopentenyl diphosphate biosynthesis via DXP pathway; isopentenyl diphosphate from 1-deoxy-D-xylulose 5-phosphate: step 1/6. Catalyzes the NADPH-dependent rearrangement and reduction of 1-deoxy-D-xylulose-5-phosphate (DXP) to 2-C-methyl-D-erythritol 4-phosphate (MEP). In Thermus thermophilus (strain ATCC BAA-163 / DSM 7039 / HB27), this protein is 1-deoxy-D-xylulose 5-phosphate reductoisomerase.